The following is a 542-amino-acid chain: Signal peptide peptidase-like 5 (542 aa).

The signal sequence occupies residues 1–23 (MAAATAAVFALLMASALAGAAAG). At 24 to 192 (GDIVHHDDEA…PDRPVVDTAE (169 aa)) the chain is on the lumenal side. 2 N-linked (GlcNAc...) asparagine glycosylation sites follow: N79 and N145. The region spanning 92–167 (CTSPKEKVSG…LPRDAGFALH (76 aa)) is the PA domain. A helical transmembrane segment spans residues 193 to 213 (VFLWLMAVGTVLCASYWSAWS). At 214-245 (AREALCEQEKLLKDGREVLLNVENGSSSGMID) the chain is on the cytoplasmic side. The chain crosses the membrane as a helical span at residues 246–266 (INVASAIMFVVVASCFLIMLY). Topologically, residues 267 to 275 (KMMSSWFVE) are lumenal. The chain crosses the membrane as a helical span at residues 276–296 (LLVVIFCVGGVEGLQTCLVAL). Residues 297–316 (LSRWFRAASESFFKVPFFGA) are Cytoplasmic-facing. A helical transmembrane segment spans residues 317-337 (VSYLTLAVSPFCIVFAVLWAV). The Lumenal segment spans residues 338–342 (HRHFT). Residues 343–363 (YAWIGQDILGIALIITVIQIV) traverse the membrane as a helical segment. Over 364 to 367 (RVPN) the chain is Cytoplasmic. Residues 368–388 (LKVGSVLLSCAFFYDIFWVFV) traverse the membrane as a helical segment. Residue D382 is part of the active site. The Lumenal segment spans residues 389 to 426 (SKRWFHESVMIVVARGDKTDEDGVPMLLKIPRMFDPWG). The chain crosses the membrane as a helical span at residues 427–447 (GYSIIGFGDILLPGLLVAFAL). D435 is an active-site residue. At 448–459 (RYDWAAKKSLQT) the chain is on the cytoplasmic side. Residues 460–480 (GYFLWSMVAYGSGLLITYVAL) form a helical membrane-spanning segment. The Lumenal segment spans residues 481-486 (NLMDGH). Residues 487-507 (GQPALLYIVPFTLGALISLGW) traverse the membrane as a helical segment. The short motif at 489-491 (PAL) is the PAL element. Residues 508 to 542 (KRGELWNLWSKGEPERVCPHHMHMQPQPKTPPLVQ) are Cytoplasmic-facing.

This sequence belongs to the peptidase A22B family. In terms of processing, glycosylated.

The protein resides in the endosome membrane. Intramembrane-cleaving aspartic protease (I-CLiP) that cleaves type II membrane signal peptides in the hydrophobic plane of the membrane. The protein is Signal peptide peptidase-like 5 (SPPL5) of Oryza sativa subsp. japonica (Rice).